The sequence spans 291 residues: Serine/threonine-protein phosphatase Pgam5, mitochondrial (291 aa).

A helical membrane pass occupies residues 7 to 23 (FACGTGAGLAAFYLQRL). The disordered stretch occupies residues 59–78 (KSLVRPQKNEQPQEQNRYNS). Residues 67 to 77 (NEQPQEQNRYN) show a composition bias toward polar residues.

This sequence belongs to the phosphoglycerate mutase family. BPG-dependent PGAM subfamily. Interacts with Pk92B/ASK1.

It localises to the mitochondrion outer membrane. It carries out the reaction O-phospho-L-seryl-[protein] + H2O = L-seryl-[protein] + phosphate. It catalyses the reaction O-phospho-L-threonyl-[protein] + H2O = L-threonyl-[protein] + phosphate. Functionally, displays phosphatase activity for serine/threonine residues, and dephosphorylates and activates Pk92B kinase. Has apparently no phosphoglycerate mutase activity. In Drosophila willistoni (Fruit fly), this protein is Serine/threonine-protein phosphatase Pgam5, mitochondrial.